Consider the following 253-residue polypeptide: uncharacterized protein (253 aa).

The signal sequence occupies residues 1-16 (MCVVYRTSVLILLASG). A lipid anchor (N-palmitoyl cysteine) is attached at C17. C17 carries S-diacylglycerol cysteine lipidation.

The protein belongs to the staphylococcal tandem lipoprotein family.

The protein localises to the cell membrane. This is an uncharacterized protein from Staphylococcus aureus (strain N315).